We begin with the raw amino-acid sequence, 95 residues long: MLFTSVLDLPTSTRALPYNGKRIYLKFYNKSIKMRNSPTTADAIAWTAVKRKYYCDRGEWLPFADANDYDTTTTEEEDSSTTTTTDNETNSDDDI.

The disordered stretch occupies residues 65 to 95 (DANDYDTTTTEEEDSSTTTTTDNETNSDDDI).

This is an uncharacterized protein from Lymantria dispar multicapsid nuclear polyhedrosis virus (LdMNPV).